Reading from the N-terminus, the 147-residue chain is Lysozyme C-1 (147 aa).

The signal sequence occupies residues 1-18 (MKALIILGLLCLSVAVQG). Positions 19–147 (KVFERCELAR…VSSYVEGCSL (129 aa)) constitute a C-type lysozyme domain. 4 disulfides stabilise this stretch: C24–C145, C48–C133, C83–C99, and C95–C113. Active-site residues include E53 and D71.

It belongs to the glycosyl hydrolase 22 family. As to quaternary structure, monomer. In terms of tissue distribution, expressed in stomach.

It localises to the secreted. The enzyme catalyses Hydrolysis of (1-&gt;4)-beta-linkages between N-acetylmuramic acid and N-acetyl-D-glucosamine residues in a peptidoglycan and between N-acetyl-D-glucosamine residues in chitodextrins.. Its function is as follows. Lysozymes have primarily a bacteriolytic function; those in tissues and body fluids are associated with the monocyte-macrophage system and enhance the activity of immunoagents. The polypeptide is Lysozyme C-1 (Ovis aries (Sheep)).